We begin with the raw amino-acid sequence, 374 residues long: Probable quinol oxidase subunit 2 (374 aa).

Positions 1 to 19 (MSKFKSLLLLFGTLILLSG) are cleaved as a signal peptide. Cys-20 is lipidated: N-palmitoyl cysteine. Residue Cys-20 is the site of S-diacylglycerol cysteine attachment. A run of 2 helical transmembrane segments spans residues 43 to 63 (SIIF…IFIF) and 82 to 102 (IETI…IPTV). Residues 317–374 (ERHGMKPMILGNNEKYDNEFKKEEDHNSKEMEKISKGAKDENASKLHKKEHDDHGGGH) form a disordered region. Positions 330–374 (EKYDNEFKKEEDHNSKEMEKISKGAKDENASKLHKKEHDDHGGGH) are enriched in basic and acidic residues.

It belongs to the cytochrome c oxidase subunit 2 family.

It localises to the cell membrane. The enzyme catalyses 2 a quinol + O2 = 2 a quinone + 2 H2O. In terms of biological role, catalyzes quinol oxidation with the concomitant reduction of oxygen to water. Subunit II transfers the electrons from a quinol to the binuclear center of the catalytic subunit I. The polypeptide is Probable quinol oxidase subunit 2 (qoxA) (Staphylococcus epidermidis (strain ATCC 12228 / FDA PCI 1200)).